A 710-amino-acid chain; its full sequence is Ephexin-1 (710 aa).

Over residues 1–20 the composition is skewed to basic and acidic residues; that stretch reads METKNSEDWGKPQRKSESSS. Residues 1–146 are disordered; sequence METKNSEDWG…TPEECPALTD (146 aa). The segment at 1–272 is regulatory region; modulates activity toward RHOA, RAC1 and CDC42; it reads METKNSEDWG…VLDILQPEEI (272 aa). Over residues 123–137 the composition is skewed to polar residues; that stretch reads QEASESSSTPGNGTT. Phosphotyrosine is present on Tyr177. The tract at residues 192 to 234 is disordered; that stretch reads RRQQDAEIQGNSDGSQVGEDAGEEEEEEEEGEEEELASPPERR. Residues 211-227 are compositionally biased toward acidic residues; the sequence is DAGEEEEEEEEGEEEEL. A DH domain is found at 273 to 457; sequence RLQEAMFELV…EMVVKACNEG (185 aa). Residues 489 to 601 form the PH domain; that stretch reads WLLKQGELQQ…WMTSLAPNRR (113 aa). In terms of domain architecture, SH3 spans 612–673; sequence LDCPQVQCVH…PSSMTEEILN (62 aa). Over residues 688–699 the composition is skewed to basic and acidic residues; that stretch reads HKMEDPQRSQNK. A disordered region spans residues 688–710; that stretch reads HKMEDPQRSQNKDRRKLGSRNRQ. Residues 700-710 show a composition bias toward basic residues; the sequence is DRRKLGSRNRQ.

As to quaternary structure, interacts with CDK5R1 and EPHA4; activated by EPHA4 through the CDK5 kinase. In terms of processing, src-dependent phosphorylation at Tyr-177 upon EPHA4 activation increases the guanine exchange factor activity toward RHOA. Phosphorylation by CDK5 upon EPHA4 activation by EFNA1 may regulate dendritic spine morphogenesis. Highly expressed in brain and to a lower extent in eye.

It localises to the cytoplasm. The protein resides in the membrane. It is found in the cell projection. The protein localises to the growth cone. In terms of biological role, acts as a guanine nucleotide exchange factor (GEF) which differentially activates the GTPases RHOA, RAC1 and CDC42. Plays a role in axon guidance regulating ephrin-induced growth cone collapse and dendritic spine morphogenesis. Upon activation by ephrin through EPHA4, the GEF activity switches toward RHOA resulting in its activation. Activated RHOA promotes cone retraction at the expense of RAC1- and CDC42-stimulated growth cone extension. The polypeptide is Ephexin-1 (Ngef) (Mus musculus (Mouse)).